Consider the following 327-residue polypeptide: Embigin (327 aa).

The N-terminal stretch at 1 to 32 is a signal peptide; the sequence is MRALPGLLEARARTPRLLLLQCLLAAARPSSA. The Extracellular segment spans residues 33–260; that stretch reads DGSAPDSPFT…ELVVLSYLVP (228 aa). Asparagine 54, asparagine 61, asparagine 75, asparagine 85, asparagine 100, asparagine 189, asparagine 196, asparagine 213, and asparagine 218 each carry an N-linked (GlcNAc...) asparagine glycan. Ig-like V-type domains lie at 71–158 and 159–253; these read PVEK…NFKV and PELH…IELV. Cystine bridges form between cysteine 88–cysteine 142 and cysteine 180–cysteine 237. The chain crosses the membrane as a helical span at residues 261 to 281; sequence LKPFLVIVAEVILLVATILLC. Topologically, residues 282 to 327 are cytoplasmic; the sequence is EKYTQKKKKHSDEGKEFEQIEQLKSDDSNGIENNVPRHRKNESLGQ. The interval 287–327 is disordered; it reads KKKKHSDEGKEFEQIEQLKSDDSNGIENNVPRHRKNESLGQ. A compositionally biased stretch (basic and acidic residues) spans 291–308; sequence HSDEGKEFEQIEQLKSDD. Phosphoserine is present on serine 309.

Interacts with SLC16A1, SLC16A6 and SLC16A7.

It localises to the cell membrane. It is found in the synapse. Its function is as follows. Plays a role in the outgrowth of motoneurons and in the formation of neuromuscular junctions. Following muscle denervation, promotes nerve terminal sprouting and the formation of additional acetylcholine receptor clusters at synaptic sites without affecting terminal Schwann cell number or morphology. Delays the retraction of terminal sprouts following re-innervation of denervated endplates. May play a role in targeting the monocarboxylate transporters SLC16A1, SLC16A6 and SLC16A7 to the cell membrane. The protein is Embigin (EMB) of Homo sapiens (Human).